Consider the following 225-residue polypeptide: tRNA (guanine-N(1)-)-methyltransferase (225 aa).

S-adenosyl-L-methionine contacts are provided by residues G110 and V130–L135.

It belongs to the RNA methyltransferase TrmD family. In terms of assembly, homodimer.

The protein localises to the cytoplasm. It catalyses the reaction guanosine(37) in tRNA + S-adenosyl-L-methionine = N(1)-methylguanosine(37) in tRNA + S-adenosyl-L-homocysteine + H(+). Specifically methylates guanosine-37 in various tRNAs. This chain is tRNA (guanine-N(1)-)-methyltransferase, found in Neorickettsia sennetsu (strain ATCC VR-367 / Miyayama) (Ehrlichia sennetsu).